The chain runs to 312 residues: uncharacterized protein (312 aa).

Helical transmembrane passes span 11–31 (IAAILYSFIIGLSFLFVKIAL), 46–66 (IAFAAATVPILFGWVKLSIRV), 72–92 (ILPLALLYPALFFSFQAFGLV), 98–118 (EAGIIQAAIPIFTMVFAAYVL), 128–148 (GFTVLSVAGVMFIFVMKGVDV), 155–171 (GSLLILLSALSSAMYNT), 183–203 (TELTYIMSAIGFVVFNAIALV), 221–241 (PGFVLAIVYLGVLSSLVTSFL), 254–274 (MSAFNHVSTIVTMIAGFVILN), and 277–297 (LAWYHLAGAVCIMIGVVGSNI). EamA domains lie at 18–142 (FIIG…FIFV) and 164–297 (LSSA…GSNI).

Belongs to the EamA transporter family.

The protein resides in the cell membrane. This is an uncharacterized protein from Bacillus subtilis (strain 168).